Consider the following 300-residue polypeptide: UDP-N-acetylenolpyruvoylglucosamine reductase (300 aa).

The 166-residue stretch at 27-192 folds into the FAD-binding PCMH-type domain; that stretch reads KVGGPADYLA…ISAKFALKPG (166 aa). The active site involves Arg-171. Catalysis depends on Ser-221, which acts as the Proton donor. Residue Glu-291 is part of the active site.

Belongs to the MurB family. The cofactor is FAD.

The protein localises to the cytoplasm. The enzyme catalyses UDP-N-acetyl-alpha-D-muramate + NADP(+) = UDP-N-acetyl-3-O-(1-carboxyvinyl)-alpha-D-glucosamine + NADPH + H(+). Its pathway is cell wall biogenesis; peptidoglycan biosynthesis. In terms of biological role, cell wall formation. This Streptococcus agalactiae serotype Ia (strain ATCC 27591 / A909 / CDC SS700) protein is UDP-N-acetylenolpyruvoylglucosamine reductase.